The following is a 369-amino-acid chain: UDP-N-acetylglucosamine--N-acetylmuramyl-(pentapeptide) pyrophosphoryl-undecaprenol N-acetylglucosamine transferase (369 aa).

UDP-N-acetyl-alpha-D-glucosamine is bound by residues 10-12 (TAG), asparagine 124, arginine 161, serine 195, and glutamine 295.

It belongs to the glycosyltransferase 28 family. MurG subfamily.

Its subcellular location is the cell membrane. The enzyme catalyses di-trans,octa-cis-undecaprenyl diphospho-N-acetyl-alpha-D-muramoyl-L-alanyl-D-glutamyl-meso-2,6-diaminopimeloyl-D-alanyl-D-alanine + UDP-N-acetyl-alpha-D-glucosamine = di-trans,octa-cis-undecaprenyl diphospho-[N-acetyl-alpha-D-glucosaminyl-(1-&gt;4)]-N-acetyl-alpha-D-muramoyl-L-alanyl-D-glutamyl-meso-2,6-diaminopimeloyl-D-alanyl-D-alanine + UDP + H(+). It participates in cell wall biogenesis; peptidoglycan biosynthesis. Cell wall formation. Catalyzes the transfer of a GlcNAc subunit on undecaprenyl-pyrophosphoryl-MurNAc-pentapeptide (lipid intermediate I) to form undecaprenyl-pyrophosphoryl-MurNAc-(pentapeptide)GlcNAc (lipid intermediate II). The sequence is that of UDP-N-acetylglucosamine--N-acetylmuramyl-(pentapeptide) pyrophosphoryl-undecaprenol N-acetylglucosamine transferase from Acidothermus cellulolyticus (strain ATCC 43068 / DSM 8971 / 11B).